The following is a 423-amino-acid chain: MSYVIDRRLNGKNKSTVNRQRFLRRYRDHIKKAVEEAVSRRSITDMEHGEQISIPGRDIDEPVLHHGRGGKQTVVHPGNKEFTTGEHIARPQGGAGGKGPGKAGNSGEGMDEFSFQITQEEFLEFMFEDLELPNLVKRNLTGTDTFKTVRAGISNEGNPSRINIIRTLRSAHARRIALSGSSRAKLREATSELERIKREEPDNFGDIQALEVEIDRLKARIRRVPYLDTFDLKYNLLVKQPNPSSKAVMFCLMDVSGSMTQATKDIAKRFFILLYLFLKRNYDKIDVVFIRHHTSAREVDEEEFFYSRETGGTIVSSALKLMQEIMAARYPSSDWNIYAAQASDGDNWNDDSPICREILTKQIMPFVQYYTYVEITPREHQALWYEYERIGDDFADTFAQQQLVSAGDIYPVFRELFQRRLVS.

The segment at 65 to 110 is disordered; that stretch reads HHGRGGKQTVVHPGNKEFTTGEHIARPQGGAGGKGPGKAGNSGEGM. The span at 93-107 shows a compositional bias: gly residues; the sequence is GGAGGKGPGKAGNSG.

This sequence belongs to the UPF0229 family.

The chain is UPF0229 protein PSPTO_0546 from Pseudomonas syringae pv. tomato (strain ATCC BAA-871 / DC3000).